The chain runs to 382 residues: Anhydro-N-acetylmuramic acid kinase (382 aa).

22–29 lines the ATP pocket; that stretch reads GTSMDGVD.

Belongs to the anhydro-N-acetylmuramic acid kinase family.

The enzyme catalyses 1,6-anhydro-N-acetyl-beta-muramate + ATP + H2O = N-acetyl-D-muramate 6-phosphate + ADP + H(+). It functions in the pathway amino-sugar metabolism; 1,6-anhydro-N-acetylmuramate degradation. Its pathway is cell wall biogenesis; peptidoglycan recycling. Its function is as follows. Catalyzes the specific phosphorylation of 1,6-anhydro-N-acetylmuramic acid (anhMurNAc) with the simultaneous cleavage of the 1,6-anhydro ring, generating MurNAc-6-P. Is required for the utilization of anhMurNAc either imported from the medium or derived from its own cell wall murein, and thus plays a role in cell wall recycling. The sequence is that of Anhydro-N-acetylmuramic acid kinase from Burkholderia orbicola (strain MC0-3).